Reading from the N-terminus, the 135-residue chain is P2Y purinoceptor 4 (135 aa).

Residues 1–25 traverse the membrane as a helical segment; it reads VHFSSSVMVLLFGLPFLVTLVCYGL. Over 26-49 the chain is Cytoplasmic; sequence MALRLCRPLPGAGQSSSRLRSLRT. The helical transmembrane segment at 50–72 threads the bilayer; the sequence is IAVVMTVFAVCLVPFHITRTIYY. Residues 73 to 90 are Extracellular-facing; it reads LARLLKADCQILNIVNVV. A helical transmembrane segment spans residues 91–112; that stretch reads YKVTRPLASANSCLDPLLYLFT. Residues 113–135 lie on the Cytoplasmic side of the membrane; that stretch reads GDKYRHQLQRLCRVSAPQRRITA.

The protein belongs to the G-protein coupled receptor 1 family. In terms of tissue distribution, expressed in brain, heart, stria vascularis and vestibular labyrinth.

It is found in the cell membrane. Its function is as follows. Receptor for ATP and UTP coupled to G-proteins that activate a phosphatidylinositol-calcium second messenger system. Not activated by UDP. The protein is P2Y purinoceptor 4 (P2RY4) of Meriones unguiculatus (Mongolian jird).